The primary structure comprises 118 residues: Thioredoxin H-type 2 (118 aa).

The 112-residue stretch at 2 to 113 (AEEGQVIGVH…LQQTIAKHIS (112 aa)) folds into the Thioredoxin domain. Active-site nucleophile residues include Cys-39 and Cys-42. Cys-39 and Cys-42 form a disulfide bridge.

It belongs to the thioredoxin family. Plant H-type subfamily.

It localises to the cytoplasm. Its function is as follows. Participates in various redox reactions through the reversible oxidation of the active center dithiol to a disulfide. The H form is known to activate a number of cytosolic enzymes. The polypeptide is Thioredoxin H-type 2 (Nicotiana tabacum (Common tobacco)).